The sequence spans 504 residues: Anaerobic nitric oxide reductase transcription regulator NorR (504 aa).

Asp-57 is subject to 4-aspartylphosphate. Residues 187 to 416 (MIGLSPGMTQ…LEHAIHRAVV (230 aa)) form the Sigma-54 factor interaction domain. ATP contacts are provided by residues 215–222 (GETGTGKE) and 278–287 (ADNGTLFLDE). The H-T-H motif DNA-binding region spans 479–498 (WAACARMLETDVANLHRLAK).

It participates in nitrogen metabolism; nitric oxide reduction. Required for the expression of anaerobic nitric oxide (NO) reductase, acts as a transcriptional activator for at least the norVW operon. Activation also requires sigma-54. The chain is Anaerobic nitric oxide reductase transcription regulator NorR from Escherichia coli O45:K1 (strain S88 / ExPEC).